A 402-amino-acid polypeptide reads, in one-letter code: Imidazolonepropionase (402 aa).

The Fe(3+) site is built by His66 and His68. His66 and His68 together coordinate Zn(2+). 3 residues coordinate 4-imidazolone-5-propanoate: Arg75, Tyr138, and His171. Tyr138 lines the N-formimidoyl-L-glutamate pocket. His236 contacts Fe(3+). Residue His236 coordinates Zn(2+). Gln239 contributes to the 4-imidazolone-5-propanoate binding site. Asp311 provides a ligand contact to Fe(3+). Asp311 serves as a coordination point for Zn(2+). Asn313 and Gly315 together coordinate N-formimidoyl-L-glutamate. Residue Thr316 coordinates 4-imidazolone-5-propanoate.

The protein belongs to the metallo-dependent hydrolases superfamily. HutI family. The cofactor is Zn(2+). Fe(3+) serves as cofactor.

The protein localises to the cytoplasm. The catalysed reaction is 4-imidazolone-5-propanoate + H2O = N-formimidoyl-L-glutamate. It participates in amino-acid degradation; L-histidine degradation into L-glutamate; N-formimidoyl-L-glutamate from L-histidine: step 3/3. In terms of biological role, catalyzes the hydrolytic cleavage of the carbon-nitrogen bond in imidazolone-5-propanoate to yield N-formimidoyl-L-glutamate. It is the third step in the universal histidine degradation pathway. The sequence is that of Imidazolonepropionase from Pseudomonas aeruginosa (strain ATCC 15692 / DSM 22644 / CIP 104116 / JCM 14847 / LMG 12228 / 1C / PRS 101 / PAO1).